The following is an 85-amino-acid chain: Progonadoliberin-2 (85 aa).

The N-terminal stretch at 1-23 is a signal peptide; it reads MCVSRLVLLFGLLLCVGAQLSNA. The residue at position 24 (Gln24) is a Pyrrolidone carboxylic acid. Gly33 bears the Glycine amide mark.

This sequence belongs to the GnRH family.

Its subcellular location is the secreted. Functionally, stimulates the secretion of gonadotropins. The sequence is that of Progonadoliberin-2 (gnrh2) from Morone saxatilis (Striped bass).